The primary structure comprises 554 residues: Intraflagellar transport protein 56 (554 aa).

The tract at residues 1-24 (MMLSRAKPAVGRGVQHTDKRKKKG) is disordered. TPR repeat units lie at residues 57 to 90 (EDTNLWIGYCAFHLGDYKRALEEYENATKEENCN), 92 to 125 (EVWVNLACTYFFLGMYKQAEAAGFKASKSRLQNR), 151 to 184 (TEDQLSLASIHYMRSHYQEAIDIYKRILLDNREY), and 468 to 501 (ANDCYKMGQFYYSAKAFDVLERLDPNPEYWEGKR).

It belongs to the IFT56 family. As to quaternary structure, component of the IFT complex B. Interacts with IFT46; the interaction is direct.

It localises to the cell projection. Its subcellular location is the cilium. Component of the intraflagellar transport (IFT) complex B required for transport of proteins in the motile cilium. Required for transport of specific ciliary cargo proteins related to motility, while it is neither required for IFT complex B assembly or motion nor for cilium assembly. Required for efficient coupling between the accumulation of GLI2 and GLI3 at the ciliary tips and their dissociation from the negative regulator SUFU. Plays a key role in maintaining the integrity of the IFT complex B and the proper ciliary localization of the IFT complex B components. Not required for IFT complex A ciliary localization or function. Essential for maintaining proper microtubule organization within the ciliary axoneme. The sequence is that of Intraflagellar transport protein 56 from Homo sapiens (Human).